A 298-amino-acid polypeptide reads, in one-letter code: Glutamyl-Q tRNA(Asp) synthetase (298 aa).

L-glutamate-binding positions include 9–13 and glutamate 45; that span reads RFAPS. The 'HIGH' region motif lies at 12–22; the sequence is PSPSGELHFGS. Zn(2+) is bound by residues cysteine 101, cysteine 103, tyrosine 115, and cysteine 119. Positions 172 and 190 each coordinate L-glutamate. Residues 228–232 carry the 'KMSKS' region motif; the sequence is KLSKQ. Lysine 231 contacts ATP.

This sequence belongs to the class-I aminoacyl-tRNA synthetase family. GluQ subfamily. Zn(2+) serves as cofactor.

Catalyzes the tRNA-independent activation of glutamate in presence of ATP and the subsequent transfer of glutamate onto a tRNA(Asp). Glutamate is transferred on the 2-amino-5-(4,5-dihydroxy-2-cyclopenten-1-yl) moiety of the queuosine in the wobble position of the QUC anticodon. This Citrobacter koseri (strain ATCC BAA-895 / CDC 4225-83 / SGSC4696) protein is Glutamyl-Q tRNA(Asp) synthetase.